Consider the following 228-residue polypeptide: Ribose-5-phosphate isomerase A (228 aa).

Substrate contacts are provided by residues 32-35 (TGST), 85-88 (DGAD), and 98-101 (KGGG). Glu107 functions as the Proton acceptor in the catalytic mechanism. Lys125 contributes to the substrate binding site.

Belongs to the ribose 5-phosphate isomerase family. As to quaternary structure, homodimer.

It carries out the reaction aldehydo-D-ribose 5-phosphate = D-ribulose 5-phosphate. The protein operates within carbohydrate degradation; pentose phosphate pathway; D-ribose 5-phosphate from D-ribulose 5-phosphate (non-oxidative stage): step 1/1. Its function is as follows. Catalyzes the reversible conversion of ribose-5-phosphate to ribulose 5-phosphate. The chain is Ribose-5-phosphate isomerase A from Cupriavidus pinatubonensis (strain JMP 134 / LMG 1197) (Cupriavidus necator (strain JMP 134)).